Consider the following 245-residue polypeptide: tRNA pseudouridine synthase A (245 aa).

Residue D52 is the Nucleophile of the active site. Y112 lines the substrate pocket.

Belongs to the tRNA pseudouridine synthase TruA family. As to quaternary structure, homodimer.

The catalysed reaction is uridine(38/39/40) in tRNA = pseudouridine(38/39/40) in tRNA. Functionally, formation of pseudouridine at positions 38, 39 and 40 in the anticodon stem and loop of transfer RNAs. The polypeptide is tRNA pseudouridine synthase A (Dictyoglomus thermophilum (strain ATCC 35947 / DSM 3960 / H-6-12)).